An 831-amino-acid polypeptide reads, in one-letter code: Periplasmic nitrate reductase (831 aa).

Positions 1–35 (MTISDSRRTFLKASAAAATASAAGIPLANGTAAEA) form a signal peptide, tat-type signal. Residues 42–98 (IRWDKAACRFCGTGCSVLVGTKEGRVVATQGDPDAPVNRGLNCIKGYFLSKIMYGED) form the 4Fe-4S Mo/W bis-MGD-type domain. Residues cysteine 49, cysteine 52, cysteine 56, and cysteine 84 each contribute to the [4Fe-4S] cluster site. Mo-bis(molybdopterin guanine dinucleotide)-binding positions include lysine 86, glutamine 153, asparagine 178, cysteine 182, 215–222 (WGSNMAEM), 246–250 (STYEH), 265–267 (QTD), methionine 375, glutamine 379, asparagine 485, 511–512 (SD), lysine 534, aspartate 561, and 721–730 (TGRVLEHWHS). Residue tryptophan 797 coordinates substrate. Asparagine 805 and lysine 822 together coordinate Mo-bis(molybdopterin guanine dinucleotide).

Belongs to the prokaryotic molybdopterin-containing oxidoreductase family. NasA/NapA/NarB subfamily. As to quaternary structure, component of the periplasmic nitrate reductase NapAB complex composed of NapA and NapB. [4Fe-4S] cluster is required as a cofactor. The cofactor is Mo-bis(molybdopterin guanine dinucleotide). In terms of processing, predicted to be exported by the Tat system. The position of the signal peptide cleavage has not been experimentally proven.

It localises to the periplasm. The catalysed reaction is 2 Fe(II)-[cytochrome] + nitrate + 2 H(+) = 2 Fe(III)-[cytochrome] + nitrite + H2O. Catalytic subunit of the periplasmic nitrate reductase complex NapAB. Receives electrons from NapB and catalyzes the reduction of nitrate to nitrite. The chain is Periplasmic nitrate reductase from Dinoroseobacter shibae (strain DSM 16493 / NCIMB 14021 / DFL 12).